The chain runs to 2265 residues: Collagen alpha-6(VI) chain (2265 aa).

Residues 1 to 18 form the signal peptide; sequence MLLVLCLTMICFHVCVNQ. Residues 19-1390 form a nonhelical region region; sequence DSGPEYADVV…TCCCLLCKCT (1372 aa). VWFA domains lie at 26 to 205, 228 to 406, 435 to 605, 621 to 790, 808 to 981, 999 to 1170, and 1186 to 1378; these read DVVF…IKDV, DVVF…LKKL, DIYL…RNQV, DIMF…EDDL, DVVF…FSDV, DLVF…KKRI, and DVVV…INVA. N-linked (GlcNAc...) asparagine glycans are attached at residues N197, N238, and N346. N760 is a glycosylation site (N-linked (GlcNAc...) asparagine). The tract at residues 1391–1724 is triple-helical region; sequence GGDGAMGDPG…GRKGVKGARG (334 aa). The interval 1398-1722 is disordered; sequence DPGSAGKKGP…PPGRKGVKGA (325 aa). Over residues 1455 to 1470 the composition is skewed to acidic residues; it reads EEGEVGEDGLDGLDGE. The span at 1497 to 1507 shows a compositional bias: basic and acidic residues; that stretch reads AAGDRGAKGLR. The short motif at 1507–1509 is the Cell attachment site element; sequence RGD. Basic residues predominate over residues 1546 to 1558; sequence SRRKMVVHGRRGH. The tract at residues 1725 to 2265 is nonhelical region; sequence LASFSTCDLI…ATSKLGKRSA (541 aa). 2 VWFA domains span residues 1756–1936 and 1964–2165; these read ELVF…ERLQ and DTAF…INSI. The disordered stretch occupies residues 2186-2205; sequence SRDLKPPPRQFRSFVPGPQK.

Belongs to the type VI collagen family. In terms of assembly, trimers composed of three different chains: alpha-1(VI), alpha-2(VI), and alpha-3(VI) or alpha-4(VI) or alpha-5(VI) or alpha-6(VI). Post-translationally, prolines at the third position of the tripeptide repeating unit (G-X-Y) are hydroxylated in some or all of the chains. As to expression, in newborn, it is expressed in lung, heart, kidney, muscle, brain, intestine, skin, femur and sternum. In adult, it is expressed in lung, heart, muscle, ovary, brain, liver and sternum.

The protein resides in the secreted. The protein localises to the extracellular space. It is found in the extracellular matrix. Functionally, collagen VI acts as a cell-binding protein. The protein is Collagen alpha-6(VI) chain (Col6a6) of Mus musculus (Mouse).